A 58-amino-acid chain; its full sequence is Sperm histone P2b (58 aa).

A disordered region spans residues 20–41 (LRRRRYRSSRRRRRRPCRRRRH).

This sequence belongs to the protamine P2 family. In terms of tissue distribution, testis.

It localises to the nucleus. The protein localises to the chromosome. Its function is as follows. Protamines substitute for histones in the chromatin of sperm during the haploid phase of spermatogenesis. They compact sperm DNA into a highly condensed, stable and inactive complex. The chain is Sperm histone P2b from Equus caballus (Horse).